We begin with the raw amino-acid sequence, 285 residues long: Sulfotransferase 2A1 (285 aa).

Residues Lys-44, Ser-45, Gly-46, Thr-47, Asn-48, and Trp-49 each coordinate 3'-phosphoadenylyl sulfate. His-99 serves as the catalytic Proton acceptor. 8 residues coordinate 3'-phosphoadenylyl sulfate: Arg-121, Ser-129, Tyr-184, Ser-218, Met-223, Arg-247, Lys-248, and Gly-249. Ser-251 carries the phosphoserine modification.

It belongs to the sulfotransferase 1 family. As to quaternary structure, homodimer. The N-terminus is blocked. In terms of tissue distribution, liver, adrenal and at lower level in the kidney. Is present in human fetus in higher level in the adrenal than the liver and the kidney.

Its subcellular location is the cytoplasm. The catalysed reaction is an alcohol + 3'-phosphoadenylyl sulfate = an alkyl sulfate + adenosine 3',5'-bisphosphate + H(+). It catalyses the reaction (24S)-hydroxycholesterol + 3'-phosphoadenylyl sulfate = (24S)-hydroxycholesterol 24-sulfate + adenosine 3',5'-bisphosphate + H(+). The enzyme catalyses (24S)-hydroxycholesterol + 3'-phosphoadenylyl sulfate = (24S)-hydroxycholesterol 3-sulfate + adenosine 3',5'-bisphosphate + H(+). It carries out the reaction (24S)-hydroxycholesterol 24-sulfate + 3'-phosphoadenylyl sulfate = (24S)-hydroxycholesterol 3,24-disulfate + adenosine 3',5'-bisphosphate + H(+). The catalysed reaction is 3beta-hydroxyandrost-5-en-17-one + 3'-phosphoadenylyl sulfate = dehydroepiandrosterone 3-sulfate + adenosine 3',5'-bisphosphate + H(+). It catalyses the reaction pregnenolone + 3'-phosphoadenylyl sulfate = pregnenolone sulfate + adenosine 3',5'-bisphosphate + H(+). The enzyme catalyses androsterone + 3'-phosphoadenylyl sulfate = androsterone 3alpha-sulfate + adenosine 3',5'-bisphosphate + H(+). It carries out the reaction taurolithocholate + 3'-phosphoadenylyl sulfate = taurolithocholate 3-sulfate + adenosine 3',5'-bisphosphate + H(+). The catalysed reaction is lithocholate + 3'-phosphoadenylyl sulfate = lithocholate sulfate + adenosine 3',5'-bisphosphate + H(+). Its activity is regulated as follows. Subject to substrate inhibition. Alternate orientations for binding of steroid substrates to SULT2A1 may play a role in substrate inhibition. Functionally, sulfotransferase that utilizes 3'-phospho-5'-adenylyl sulfate (PAPS) as sulfonate donor to catalyze the sulfonation of steroids and bile acids in the liver and adrenal glands. Mediates the sulfation of a wide range of steroids and sterols, including pregnenolone, androsterone, DHEA, bile acids, cholesterol and as well many xenobiotics that contain alcohol and phenol functional groups. Sulfonation increases the water solubility of most compounds, and therefore their renal excretion, but it can also result in bioactivation to form active metabolites. Plays an important role in maintening steroid and lipid homeostasis. Plays a key role in bile acid metabolism. In addition, catalyzes the metabolic activation of potent carcinogenic polycyclic arylmethanols. This is Sulfotransferase 2A1 (SULT2A1) from Homo sapiens (Human).